The chain runs to 456 residues: Exodeoxyribonuclease 7 large subunit (456 aa).

Belongs to the XseA family. As to quaternary structure, heterooligomer composed of large and small subunits.

The protein resides in the cytoplasm. The enzyme catalyses Exonucleolytic cleavage in either 5'- to 3'- or 3'- to 5'-direction to yield nucleoside 5'-phosphates.. In terms of biological role, bidirectionally degrades single-stranded DNA into large acid-insoluble oligonucleotides, which are then degraded further into small acid-soluble oligonucleotides. The chain is Exodeoxyribonuclease 7 large subunit from Azotobacter vinelandii (strain DJ / ATCC BAA-1303).